Consider the following 304-residue polypeptide: CD-NTase-associated protein 6 (304 aa).

G75–S80 is an ATP binding site.

The protein belongs to the AAA ATPase family. Oligomerizes. Homohexamer. Forms a 1:1:6 CdnD:Cap7:Cap6 complex.

In terms of biological role, regulates complex assembly in a CBASS antivirus system. CBASS (cyclic oligonucleotide-based antiphage signaling system) provides immunity against bacteriophage. The CD-NTase protein synthesizes cyclic nucleotides in response to infection; these serve as specific second messenger signals. The signals activate a diverse range of effectors, leading to bacterial cell death and thus abortive phage infection. A type III-C(AAA) CBASS system. Its function is as follows. Prevents the CdnD:Cap7:Cap8 complex (also called CdnD:HORMA2:HORMA3) from synthesizing 2',3',3'-cyclic AMP-AMP-AMP (cAAA). Binds and disassembles an active CdnD:Cap7:Cap8 complex, inhibiting the complex's ability to synthesize cyclic nucleotide second messengers. An AAA+-ATPase remodeler, in the absence of foreign threat Cap6 probably maintains the Cap7 protein in an open, inactive state. Once activated (presumably by a bacteriophage protein) Cap7 binds to and activates its cognate CD-NTase (CdnD in this bacteria) to synthesize cAAA, a cyclic nucleotide second messenger. cAAA activates the NucC endonuclease which degrades all DNA in the infected cell, causing cell death and abortive phage infection. The protein is CD-NTase-associated protein 6 of Pseudomonas aeruginosa.